The chain runs to 227 residues: Thiocyanate methyltransferase 1 (227 aa).

Residues W36, W40, W47, and G74 each coordinate S-adenosyl-L-methionine. S86 is subject to Phosphoserine. Residues D95, 123–124 (DV), and Y139 each bind S-adenosyl-L-methionine.

It belongs to the class I-like SAM-binding methyltransferase superfamily. TPMT family. Expressed in shoots, leaves, stems, inflorescences, flowers and green siliques.

The catalysed reaction is thiocyanate + S-adenosyl-L-methionine = methyl thiocyanate + S-adenosyl-L-homocysteine. Functionally, S-adenosyl-L-methionine-dependent methyltransferase. Involved in glucosinolate metabolism and defense against phytopathogens. Highly reactive to thiocyanate (NCS(-)) derived from myrosinase-mediated hydrolysis of glucosinolates upon tissue damage. The chain is Thiocyanate methyltransferase 1 from Arabidopsis thaliana (Mouse-ear cress).